Reading from the N-terminus, the 250-residue chain is Probable transcriptional regulatory protein Paes_0496 (250 aa).

This sequence belongs to the TACO1 family.

Its subcellular location is the cytoplasm. This is Probable transcriptional regulatory protein Paes_0496 from Prosthecochloris aestuarii (strain DSM 271 / SK 413).